The sequence spans 502 residues: ATP synthase subunit alpha (502 aa).

The interval 115–135 is disordered; that stretch reads VDGLGPINTTNTRPIESPAPG. 169–176 provides a ligand contact to ATP; that stretch reads GDRQTGKT.

Belongs to the ATPase alpha/beta chains family. In terms of assembly, F-type ATPases have 2 components, CF(1) - the catalytic core - and CF(0) - the membrane proton channel. CF(1) has five subunits: alpha(3), beta(3), gamma(1), delta(1), epsilon(1). CF(0) has three main subunits: a(1), b(2) and c(9-12). The alpha and beta chains form an alternating ring which encloses part of the gamma chain. CF(1) is attached to CF(0) by a central stalk formed by the gamma and epsilon chains, while a peripheral stalk is formed by the delta and b chains.

The protein resides in the cell membrane. It carries out the reaction ATP + H2O + 4 H(+)(in) = ADP + phosphate + 5 H(+)(out). Produces ATP from ADP in the presence of a proton gradient across the membrane. The alpha chain is a regulatory subunit. The sequence is that of ATP synthase subunit alpha from Bacillus mycoides (strain KBAB4) (Bacillus weihenstephanensis).